Reading from the N-terminus, the 85-residue chain is Beta-insect depressant toxin BmKITa (85 aa).

An N-terminal signal peptide occupies residues 1–21 (MKLFLLLLISASMLIDGLVNA). In terms of domain architecture, LCN-type CS-alpha/beta spans 22-82 (DGYIRGSNGC…TWKSESNTCG (61 aa)). 4 cysteine pairs are disulfide-bonded: Cys31-Cys81, Cys35-Cys56, Cys42-Cys63, and Cys46-Cys65. Gly82 carries the glycine amide modification.

In terms of tissue distribution, expressed by the venom gland.

It is found in the secreted. Its function is as follows. Depressant insect beta-toxins cause a transient contraction paralysis followed by a slow flaccid paralysis. They bind voltage-independently at site-4 of sodium channels (Nav) and shift the voltage of activation toward more negative potentials thereby affecting sodium channel activation and promoting spontaneous and repetitive firing. This toxin also displays an evident analgesic effect but is devoid of any toxicity on mice. This is Beta-insect depressant toxin BmKITa from Olivierus martensii (Manchurian scorpion).